The chain runs to 1486 residues: MIERGKFRSLTLINWNGFFARTFDLDELVTTLSGGNGAGKSTTMAAFVTALIPDLTLLHFRNTTEAGATSGSRDKGLHGKLKAGVCYSMLDTINSHHQRVVVGVRLQQVAGRDRKVDIKPFAIQGLPMSVQPTQLVTETLNERQARVLPLNELKDKLEAMEGVQFKQFNSITDYHSLMFDLGIIARRLRSASDRSKFYRLIEASLYGGISSAITRSLRDYLLPENSGVRKAFQDMEAALRENRMTLEAIRVTQSDRDLFKHLISEATNYVAADYMRHANERRVHLDKALEFRRELHTSRKQLAAEQYKHVDMARELAEHNGAEGDLEADYQAASDHLNLVQTALRQQEKIERYEADLDELQIRLEEQNEVVAEAIERQEENEARAEAAELEVDELKSQLADYQQALDVQQTRAIQYNQAIAALNRAKELCHLPDLTADSAAEWLETFQAKELEATEKMLSLEQKMSMAQTAHSQFEQAYQLVVAINGPLARNEAWDVARELLREGVDQRHLAEQVQPLRMRLSELEQRLREQQEAERLLADFCKRQGKNFDIDELEALHQELEARIASLSDSVSNAREERMALRQEQEQLQSRIQSLMQRAPVWLAAQNSLNQLSEQCGEEFTSSQDVTEFLQQLLEREREAIVERDEVGARKNAVDEEIERLSQPGGSEDQRLNALAERFGGVLLSEIYDDVSLEDAPYFSALYGPSRHAIVVPDLSQVTEHLEGLTDCPEDLYLIEGDPQSFDDSVFSVDELEKAVVVKIADRQWRYSRFPEVPLFGRAARESRIESLHAEREVLSERFATLSFDVQKTQRLHQAFSRFIGSHLAVAFESDPEAEIRQLNSRRVELERALSNHENDNQQQRIQFEQAKEGVTALNRILPRLNLLADDSLADRVDEIRERLDEAQEAARFVQQFGNQLAKLEPIVSVLQSDPEQFEQLKEDYAYSQQMQRDARQQAFALTEVVQRRAHFSYSDSAEMLSGNSDLNEKLRERLEQAEAERTRAREALRGHAAQLNQYNQVLASLKSSYDTKKELLNDLQRELQDIGVRADSGAEERARIRRDELHAQLSNNRSRRNQLEKALTFCEAEMDNLTRKLRKLERDYFEMREQVVTAKAGWCAVMRMVKDNGVERRLHRRELAYLSADDLRSMSDKALGALRLAVADNEHLRDVLRMSEDPKRPERKIQFFVAVYQHLRERIRQDIIRTDDPVEAIEQMEIELSRLTEELTSREQKLAISSRSVANIIRKTIQREQNRIRMLNQGLQNVSFGQVNSVRLNVNVRETHAMLLDVLSEQHEQHQDLFNSNRLTFSEALAKLYQRLNPQIDMGQRTPQTIGEELLDYRNYLEMEVEVNRGSDGWLRAESGALSTGEAIGTGMSILVMVVQSWEDESRRLRGKDISPCRLLFLDEAARLDARSIATLFELCERLQMQLIIAAPENISPEKGTTYKLVRKVFQNTEHVHVVGLRGFAPQLPETLPGSDEAPSQAS.

34–41 serves as a coordination point for ATP; sequence GGNGAGKS. 3 coiled-coil regions span residues 326-418, 444-480, and 509-603; these read LEAD…QYNQ, LETF…QAYQ, and RHLA…RAPV. Residues 666–783 form a flexible hinge region; it reads PGGSEDQRLN…EVPLFGRAAR (118 aa). Coiled-coil stretches lie at residues 835–923, 977–1115, and 1209–1266; these read EAEI…AKLE, EMLS…TAKA, and VEAI…QNVS.

The protein belongs to the SMC family. MukB subfamily. As to quaternary structure, homodimerization via its hinge domain. Binds to DNA via its C-terminal region. Interacts, and probably forms a ternary complex, with MukE and MukF via its C-terminal region. The complex formation is stimulated by calcium or magnesium. Interacts with tubulin-related protein FtsZ.

The protein localises to the cytoplasm. It is found in the nucleoid. Functionally, plays a central role in chromosome condensation, segregation and cell cycle progression. Functions as a homodimer, which is essential for chromosome partition. Involved in negative DNA supercoiling in vivo, and by this means organize and compact chromosomes. May achieve or facilitate chromosome segregation by condensation DNA from both sides of a centrally located replisome during cell division. This chain is Chromosome partition protein MukB, found in Escherichia coli O1:K1 / APEC.